Reading from the N-terminus, the 305-residue chain is Divergent heme oxygenase-like protein (305 aa).

Positions M1–N18 are cleaved as a signal peptide. Residues M1–N83 are sufficient for apicoplast targeting. N-linked (GlcNAc...) asparagine glycosylation is found at N132, N159, and N288.

Post-translationally, proteolytically cleaved; targeted by its N-terminal leader sequence for import into the apicoplast where it undergoes proteolytic processing, resulting in an N-terminus starting at or near Gly-33 in the mature protein.

The protein resides in the plastid. It localises to the apicoplast. In terms of biological role, essential for blood-stage parasite viability. Required for apicoplast biogenesis. Associates with the apicoplast genome and mediates apicoplast gene expression. Can bind heme. Can bind protoporphyrin IX. The sequence is that of Divergent heme oxygenase-like protein from Plasmodium falciparum (isolate 3D7).